The following is a 479-amino-acid chain: Glutamate--tRNA ligase (479 aa).

The 'HIGH' region signature appears at 9–19 (PSPTGNLHIGT). The short motif at 243-247 (KLSKR) is the 'KMSKS' region element. Position 246 (lysine 246) interacts with ATP.

This sequence belongs to the class-I aminoacyl-tRNA synthetase family. Glutamate--tRNA ligase type 1 subfamily. In terms of assembly, monomer.

The protein resides in the cytoplasm. The enzyme catalyses tRNA(Glu) + L-glutamate + ATP = L-glutamyl-tRNA(Glu) + AMP + diphosphate. Catalyzes the attachment of glutamate to tRNA(Glu) in a two-step reaction: glutamate is first activated by ATP to form Glu-AMP and then transferred to the acceptor end of tRNA(Glu). The sequence is that of Glutamate--tRNA ligase from Synechococcus sp. (strain JA-2-3B'a(2-13)) (Cyanobacteria bacterium Yellowstone B-Prime).